Reading from the N-terminus, the 177-residue chain is Large ribosomal subunit protein uL6 (177 aa).

Belongs to the universal ribosomal protein uL6 family. In terms of assembly, part of the 50S ribosomal subunit.

In terms of biological role, this protein binds to the 23S rRNA, and is important in its secondary structure. It is located near the subunit interface in the base of the L7/L12 stalk, and near the tRNA binding site of the peptidyltransferase center. The polypeptide is Large ribosomal subunit protein uL6 (Proteus mirabilis (strain HI4320)).